The chain runs to 312 residues: Pseudouridine-5'-phosphate glycosidase (312 aa).

Residue Glu-31 is the Proton donor of the active site. 2 residues coordinate substrate: Lys-93 and Val-113. Asp-145 provides a ligand contact to Mn(2+). Substrate is bound at residue 147 to 149 (SAD). The active-site Nucleophile is the Lys-166.

This sequence belongs to the pseudouridine-5'-phosphate glycosidase family. As to quaternary structure, homotrimer. It depends on Mn(2+) as a cofactor. Fe(2+) serves as cofactor. Co(2+) is required as a cofactor.

The enzyme catalyses D-ribose 5-phosphate + uracil = psi-UMP + H2O. Inhibited by Zn(2+) and Ni(2+). In terms of biological role, catalyzes the reversible cleavage of pseudouridine 5'-phosphate (PsiMP) to ribose 5-phosphate and uracil. Functions biologically in the cleavage direction, as part of a pseudouridine degradation pathway. The chain is Pseudouridine-5'-phosphate glycosidase from Escherichia coli (strain K12).